The following is a 187-amino-acid chain: Ras-like protein rasD (187 aa).

GTP is bound at residue 10–17 (GGGGVGKS). An Effector region motif is present at residues 32–40 (YDPTIEDSY). Residues 57–61 (DTAGQ) and 116–119 (NKAD) contribute to the GTP site. Cys184 bears the Cysteine methyl ester mark. Cys184 is lipidated: S-geranylgeranyl cysteine. Residues 185 to 187 (LIL) constitute a propeptide, removed in mature form.

The protein belongs to the small GTPase superfamily. Ras family.

The protein localises to the cell membrane. It catalyses the reaction GTP + H2O = GDP + phosphate + H(+). Alternates between an inactive form bound to GDP and an active form bound to GTP. Activated by a guanine nucleotide-exchange factor (GEF) and inactivated by a GTPase-activating protein (GAP). Its function is as follows. Ras proteins bind GDP/GTP and possess intrinsic GTPase activity. The chain is Ras-like protein rasD (rasD) from Dictyostelium discoideum (Social amoeba).